The sequence spans 238 residues: MSQSLIVALDFPGKQDVEQFLRHFEGEELFVKVGMELFYKEGPAIITYLKEKGHKIFLDLKLHDIPNTVKSAMRSLASLDVDMVNVHAAGGSSMMKAAIEGLEEGKQEGKERPICIAVTQLTSTSEAMMKKEIGIEKTLEEAVAHYAKLTKESGLDGVVCSTLEVPKLREVCGDEFVTVTPGIRLASDDVNDQVRVATPKRARELGSSYIVVGRSITKAENPLEAYKTVKQQWEGVTV.

Residues D10, K32, 59–68, T122, R184, Q193, G213, and R214 contribute to the substrate site; that span reads DLKLHDIPNT. K61 serves as the catalytic Proton donor.

Belongs to the OMP decarboxylase family. Type 1 subfamily. In terms of assembly, homodimer.

It carries out the reaction orotidine 5'-phosphate + H(+) = UMP + CO2. The protein operates within pyrimidine metabolism; UMP biosynthesis via de novo pathway; UMP from orotate: step 2/2. Catalyzes the decarboxylation of orotidine 5'-monophosphate (OMP) to uridine 5'-monophosphate (UMP). In Bacillus cereus (strain AH187), this protein is Orotidine 5'-phosphate decarboxylase.